We begin with the raw amino-acid sequence, 356 residues long: Phosphate acyltransferase (356 aa).

The protein belongs to the PlsX family. Homodimer. Probably interacts with PlsY.

It is found in the cytoplasm. It catalyses the reaction a fatty acyl-[ACP] + phosphate = an acyl phosphate + holo-[ACP]. It participates in lipid metabolism; phospholipid metabolism. In terms of biological role, catalyzes the reversible formation of acyl-phosphate (acyl-PO(4)) from acyl-[acyl-carrier-protein] (acyl-ACP). This enzyme utilizes acyl-ACP as fatty acyl donor, but not acyl-CoA. This is Phosphate acyltransferase from Xanthobacter autotrophicus (strain ATCC BAA-1158 / Py2).